Consider the following 73-residue polypeptide: Putative antitoxin VapB38 (73 aa).

Probable antitoxin component of a type II toxin-antitoxin (TA) system. Its putative cognate toxin is VapC38. The chain is Putative antitoxin VapB38 (vapB38) from Mycobacterium tuberculosis (strain ATCC 25618 / H37Rv).